The sequence spans 147 residues: TRAF-interacting protein with FHA domain-containing protein B (147 aa).

In terms of domain architecture, FHA spans 36–108 (LLVGRGQNTH…LGTINRISFS (73 aa)).

In terms of assembly, interacts with TIFA. Expressed at high levels in spleen and at moderate levels in lung, thymus, and small intestine.

Functionally, inhibits TIFA-mediated TRAF6 activation possibly by inducing a conformational change in TIFA. The sequence is that of TRAF-interacting protein with FHA domain-containing protein B from Mus musculus (Mouse).